The sequence spans 301 residues: DSC E3 ubiquitin ligase complex subunit B (301 aa).

Transmembrane regions (helical) follow at residues 9–29 (APITKLLLIYTIASSIALSIL), 52–72 (LATWQLAGFTNSTEALFAAML), and 90–110 (TFIISTLPYTSLLPPLLLVLL). Positions 268 to 284 (AAAAASGNAGSASEASG) are enriched in low complexity. Positions 268 to 301 (AAAAASGNAGSASEASGQRQRRREGGIMDRLRAL) are disordered. Residues 290-301 (REGGIMDRLRAL) show a composition bias toward basic and acidic residues.

Component of the DSC E3 ubiquitin ligase complex composed of dscA, dscB, dscC and dscD.

The protein localises to the endoplasmic reticulum membrane. The enzyme catalyses S-ubiquitinyl-[E2 ubiquitin-conjugating enzyme]-L-cysteine + [acceptor protein]-L-lysine = [E2 ubiquitin-conjugating enzyme]-L-cysteine + N(6)-ubiquitinyl-[acceptor protein]-L-lysine.. Its pathway is protein modification; protein ubiquitination. In terms of biological role, component of the DSC E3 ubiquitin ligase complex which is required for the srbA transcriptional activator proteolytic cleavage to release the soluble transcription factor from the membrane in low oxygen or sterol conditions. Required for growth during hypoxia and triazole drug susceptibility, as well as for virulence in a murine model of invasive pulmonary aspergillosis (IPA). This is DSC E3 ubiquitin ligase complex subunit B from Aspergillus fumigatus (strain ATCC MYA-4609 / CBS 101355 / FGSC A1100 / Af293) (Neosartorya fumigata).